Consider the following 99-residue polypeptide: Acylphosphatase (99 aa).

The Acylphosphatase-like domain occupies 14-99; the sequence is AVDVTVTGRV…DQGLRSFGVR (86 aa). Catalysis depends on residues Arg-29 and Asn-47.

This sequence belongs to the acylphosphatase family.

It carries out the reaction an acyl phosphate + H2O = a carboxylate + phosphate + H(+). In Nocardioides sp. (strain ATCC BAA-499 / JS614), this protein is Acylphosphatase (acyP).